The chain runs to 390 residues: Homeobox protein Hox-B2a (390 aa).

4 disordered regions span residues 40–73 (STAI…TASN), 81–100 (TAPP…GAPL), 108–155 (KEKK…LDNV), and 211–338 (MKHK…SLPD). Residues 52-73 (PSLSPCTGNQARPRSQKRTASN) show a composition bias toward polar residues. Residues 103 to 108 (EFPWMK) carry the Antp-type hexapeptide motif. Residues 118-135 (KPGATAAAAAASPSQASS) are compositionally biased toward low complexity. The homeobox DNA-binding region spans 158 to 217 (SRRLRTAYTNTQLLELEKEFHFNKYLCRPRRVEIAALLDLTERQVKVWFQNRRMKHKRQT). The span at 244–262 (SSQSLEVSGSGSAAPSESE) shows a compositional bias: low complexity. Residues 263–290 (TCPTTAAYTNSSDKSQPTPEEGQASQPE) show a composition bias toward polar residues.

This sequence belongs to the Antp homeobox family. Proboscipedia subfamily.

It is found in the nucleus. Functionally, sequence-specific transcription factor which is part of a developmental regulatory system that provides cells with specific positional identities on the anterior-posterior axis. Plays an important role in the patterning of hindbrain and pharyngeal arches. The protein is Homeobox protein Hox-B2a (hoxb2a) of Danio rerio (Zebrafish).